Consider the following 409-residue polypeptide: Outer membrane protein YopM (409 aa).

LRR repeat units follow at residues 72–91 (QAHE…ELPP), 92–113 (HLES…PQSL), 114–131 (KSLL…DLPP), 132–153 (LLEY…QNSS), 154–173 (FLKI…DLPP), 174–195 (SLEF…QNLP), 196–215 (FLTA…DLPL), 216–237 (SLES…QNLP), 238–257 (FLTT…DLPP), 258–279 (SLEA…PQSL), 280–297 (TFLD…ELPP), 298–317 (NLYY…DLPP), 318–339 (SLEE…PPRL), 340–357 (ERLI…ELPQ), and 358–379 (NLKQ…PESV). Residues Asn246 and Asp266 each contribute to the Ca(2+) site. Residues Asn307, Glu308, and Asn326 each contribute to the Ca(2+) site.

This sequence belongs to the LRR-containing bacterial E3 ligase family. Homotetramer forming a hollow cylinder with an inner diameter of approximately 35 angstroms.

It localises to the cell outer membrane. Its subcellular location is the secreted. Its function is as follows. Effector proteins function to alter host cell physiology and promote bacterial survival in host tissues. The sequence is that of Outer membrane protein YopM (yopM) from Yersinia pestis.